The following is a 513-amino-acid chain: Histidine ammonia-lyase (513 aa).

Residues 144–146 (ASG) constitute a cross-link (5-imidazolinone (Ala-Gly)). A 2,3-didehydroalanine (Ser) modification is found at Ser145.

This sequence belongs to the PAL/histidase family. Contains an active site 4-methylidene-imidazol-5-one (MIO), which is formed autocatalytically by cyclization and dehydration of residues Ala-Ser-Gly.

The protein localises to the cytoplasm. The catalysed reaction is L-histidine = trans-urocanate + NH4(+). It participates in amino-acid degradation; L-histidine degradation into L-glutamate; N-formimidoyl-L-glutamate from L-histidine: step 1/3. The protein is Histidine ammonia-lyase of Streptococcus pyogenes serotype M5 (strain Manfredo).